The following is a 450-amino-acid chain: Tubulin alpha-1 chain (450 aa).

Positions 11, 71, 144, 145, 179, 206, and 228 each coordinate GTP. Glu-71 contacts Mg(2+). The active site involves Glu-254.

It belongs to the tubulin family. As to quaternary structure, dimer of alpha and beta chains. A typical microtubule is a hollow water-filled tube with an outer diameter of 25 nm and an inner diameter of 15 nM. Alpha-beta heterodimers associate head-to-tail to form protofilaments running lengthwise along the microtubule wall with the beta-tubulin subunit facing the microtubule plus end conferring a structural polarity. Microtubules usually have 13 protofilaments but different protofilament numbers can be found in some organisms and specialized cells. It depends on Mg(2+) as a cofactor. In terms of processing, undergoes a tyrosination/detyrosination cycle, the cyclic removal and re-addition of a C-terminal tyrosine residue by the enzymes tubulin tyrosine carboxypeptidase (TTCP) and tubulin tyrosine ligase (TTL), respectively.

Its subcellular location is the cytoplasm. The protein resides in the cytoskeleton. It catalyses the reaction GTP + H2O = GDP + phosphate + H(+). In terms of biological role, tubulin is the major constituent of microtubules, a cylinder consisting of laterally associated linear protofilaments composed of alpha- and beta-tubulin heterodimers. Microtubules grow by the addition of GTP-tubulin dimers to the microtubule end, where a stabilizing cap forms. Below the cap, tubulin dimers are in GDP-bound state, owing to GTPase activity of alpha-tubulin. The polypeptide is Tubulin alpha-1 chain (TUBA1) (Hordeum vulgare (Barley)).